A 606-amino-acid chain; its full sequence is Atypical protein kinase C (606 aa).

Residues 30–113 form the PB1 domain; sequence SITVKTAYNG…SQLVIHVFPN (84 aa). A Phorbol-ester/DAG-type zinc finger spans residues 145–195; that stretch reads GHIFQAKRFNRRAFCAYCQDRIWGLGRQGFKCIQCKLLVHKKCHKLVQKHC. Residues 264–532 enclose the Protein kinase domain; it reads FELIRVIGRG…FMDIVSHPFF (269 aa). Residues 270 to 278 and Lys293 contribute to the ATP site; that span reads IGRGSYAKV. Asp388 acts as the Proton acceptor in catalysis. The 72-residue stretch at 533–604 folds into the AGC-kinase C-terminal domain; the sequence is KNMDWELLER…VNPLLMSLED (72 aa).

The protein belongs to the protein kinase superfamily. AGC Ser/Thr protein kinase family. PKC subfamily. Interacts with baz; the interaction is required for apical localization of aPKC in neuroblasts and epithelial cells. Interacts with Dap160; the interaction promotes aPKC apical localization and kinase activity. Interacts with and phosphorylates l(2)gl and yrt. Interacts with crb and ref(2)P. Forms a complex with baz, fz and Patj. Expressed in the testis. In spermatid cysts, localizes near the tips of spermatid flagellar axonemes (at protein level). Detectable in freshly laid eggs before onset of zygotic transcription so is deposited in the egg during oogenesis. At the cellular blastoderm stage, present in all cells except the pole cells. During gastrulation, strongly expressed in tissues undergoing morphogenetic movements such as invaginating mesoderm, proctodeum and cephalic furrow. Strongly expressed in neuroblasts.

The protein localises to the cytoplasm. Its subcellular location is the cell cortex. It is found in the apicolateral cell membrane. It catalyses the reaction L-seryl-[protein] + ATP = O-phospho-L-seryl-[protein] + ADP + H(+). The enzyme catalyses L-threonyl-[protein] + ATP = O-phospho-L-threonyl-[protein] + ADP + H(+). In terms of biological role, serine/threonine protein kinase which is required for apico-basal cell polarity in the germ line as well as in epithelial and neural precursor cells, for epithelial planar cell polarity and for cell proliferation. During oocyte development, required for the posterior translocation of oocyte specification factors and for the posterior establishment of the microtubule organizing center within the presumptive oocyte. Phosphorylates l(2)gl which restricts l(2)gl activity to the oocyte posterior and regulates posterior enrichment of par-1, leading to establishment of correct oocyte polarity. Essential for apical localization of l(2)gl and par-6 in neuroblasts and for exclusion of mira from the apical cortex. Phosphorylates baz which is required for targeting of baz to the postsynaptic region where it is involved in actin organization, and for apical exclusion of baz which is necessary for establishment of the apical/lateral border in epithelial cells. Phosphorylates yrt which prevents its premature apical localization and is necessary for correct epithelial cell polarization. Required for the establishment of mitotic spindle orientation during symmetric division of epithelial cells and for apical exclusion of raps/Pins. Involved in symmetric adherens junction positioning during embryogenesis. Required for polarization of the spermatid cyst which is necessary for sperm differentiation. Required for stimulation of the Toll signaling pathway which activates Dif and dl and plays a role in innate immunity. Plays a role in memory enhancement. The sequence is that of Atypical protein kinase C from Drosophila melanogaster (Fruit fly).